The following is a 281-amino-acid chain: NADPH-dependent 7-cyano-7-deazaguanine reductase (281 aa).

Position 88 to 90 (I88 to S90) interacts with substrate. Position 90–91 (S90–K91) interacts with NADPH. C189 serves as the catalytic Thioimide intermediate. Residue D196 is the Proton donor of the active site. H228–E229 lines the substrate pocket. R257–G258 serves as a coordination point for NADPH.

It belongs to the GTP cyclohydrolase I family. QueF type 2 subfamily. In terms of assembly, homodimer.

The protein localises to the cytoplasm. The catalysed reaction is 7-aminomethyl-7-carbaguanine + 2 NADP(+) = 7-cyano-7-deazaguanine + 2 NADPH + 3 H(+). Its pathway is tRNA modification; tRNA-queuosine biosynthesis. Functionally, catalyzes the NADPH-dependent reduction of 7-cyano-7-deazaguanine (preQ0) to 7-aminomethyl-7-deazaguanine (preQ1). This is NADPH-dependent 7-cyano-7-deazaguanine reductase from Yersinia pseudotuberculosis serotype O:1b (strain IP 31758).